A 490-amino-acid chain; its full sequence is UDP-N-acetylmuramoylalanine--D-glutamate ligase (490 aa).

124–130 is a binding site for ATP; that stretch reads GTNGKTT.

Belongs to the MurCDEF family.

The protein resides in the cytoplasm. The catalysed reaction is UDP-N-acetyl-alpha-D-muramoyl-L-alanine + D-glutamate + ATP = UDP-N-acetyl-alpha-D-muramoyl-L-alanyl-D-glutamate + ADP + phosphate + H(+). It functions in the pathway cell wall biogenesis; peptidoglycan biosynthesis. Its function is as follows. Cell wall formation. Catalyzes the addition of glutamate to the nucleotide precursor UDP-N-acetylmuramoyl-L-alanine (UMA). The sequence is that of UDP-N-acetylmuramoylalanine--D-glutamate ligase (murD) from Mycobacterium leprae (strain TN).